We begin with the raw amino-acid sequence, 456 residues long: tRNA modification GTPase MnmE (456 aa).

Residues R24, E81, and K120 each contribute to the (6S)-5-formyl-5,6,7,8-tetrahydrofolate site. The 164-residue stretch at 216–379 folds into the TrmE-type G domain; sequence GMTVVIAGRP…LRDHLKACMG (164 aa). Position 226 (N226) interacts with K(+). GTP contacts are provided by residues 226 to 231, 245 to 251, 270 to 273, and 335 to 338; these read NAGKSS, TAIAGTT, DTAG, and NKAD. S230 is a Mg(2+) binding site. The K(+) site is built by T245, I247, and T250. Residue T251 participates in Mg(2+) binding. Position 456 (K456) interacts with (6S)-5-formyl-5,6,7,8-tetrahydrofolate.

This sequence belongs to the TRAFAC class TrmE-Era-EngA-EngB-Septin-like GTPase superfamily. TrmE GTPase family. Homodimer. Heterotetramer of two MnmE and two MnmG subunits. K(+) is required as a cofactor.

Its subcellular location is the cytoplasm. Exhibits a very high intrinsic GTPase hydrolysis rate. Involved in the addition of a carboxymethylaminomethyl (cmnm) group at the wobble position (U34) of certain tRNAs, forming tRNA-cmnm(5)s(2)U34. The polypeptide is tRNA modification GTPase MnmE (Pseudomonas putida (strain W619)).